Reading from the N-terminus, the 362-residue chain is 3-dehydroquinate synthase (362 aa).

NAD(+) is bound by residues 71-76 (DGEQYK), 105-109 (GVVGD), 129-130 (TT), Lys-142, Lys-151, and 169-172 (CLKT). Zn(2+) is bound by residues Glu-184, His-247, and His-264.

It belongs to the sugar phosphate cyclases superfamily. Dehydroquinate synthase family. Co(2+) is required as a cofactor. Zn(2+) serves as cofactor. It depends on NAD(+) as a cofactor.

It localises to the cytoplasm. It catalyses the reaction 7-phospho-2-dehydro-3-deoxy-D-arabino-heptonate = 3-dehydroquinate + phosphate. It participates in metabolic intermediate biosynthesis; chorismate biosynthesis; chorismate from D-erythrose 4-phosphate and phosphoenolpyruvate: step 2/7. In terms of biological role, catalyzes the conversion of 3-deoxy-D-arabino-heptulosonate 7-phosphate (DAHP) to dehydroquinate (DHQ). The polypeptide is 3-dehydroquinate synthase (Escherichia coli O127:H6 (strain E2348/69 / EPEC)).